A 314-amino-acid chain; its full sequence is tRNA pseudouridine synthase B (314 aa).

A substrate-binding site is contributed by H43. D48 (nucleophile) is an active-site residue. 3 residues coordinate substrate: Y76, Y179, and L200.

It belongs to the pseudouridine synthase TruB family. Type 1 subfamily.

The catalysed reaction is uridine(55) in tRNA = pseudouridine(55) in tRNA. Its function is as follows. Responsible for synthesis of pseudouridine from uracil-55 in the psi GC loop of transfer RNAs. The polypeptide is tRNA pseudouridine synthase B (Shigella dysenteriae serotype 1 (strain Sd197)).